The sequence spans 374 residues: Queuine tRNA-ribosyltransferase (374 aa).

Aspartate 89 functions as the Proton acceptor in the catalytic mechanism. Substrate contacts are provided by residues 89–93 (DSGGF), aspartate 143, glutamine 187, and glycine 214. The RNA binding stretch occupies residues 245 to 251 (GVGKPED). Aspartate 264 functions as the Nucleophile in the catalytic mechanism. The segment at 269–273 (TRNAR) is RNA binding; important for wobble base 34 recognition. Zn(2+)-binding residues include cysteine 302, cysteine 304, cysteine 307, and histidine 333.

It belongs to the queuine tRNA-ribosyltransferase family. Homodimer. Within each dimer, one monomer is responsible for RNA recognition and catalysis, while the other monomer binds to the replacement base PreQ1. Zn(2+) serves as cofactor.

It catalyses the reaction 7-aminomethyl-7-carbaguanine + guanosine(34) in tRNA = 7-aminomethyl-7-carbaguanosine(34) in tRNA + guanine. It functions in the pathway tRNA modification; tRNA-queuosine biosynthesis. In terms of biological role, catalyzes the base-exchange of a guanine (G) residue with the queuine precursor 7-aminomethyl-7-deazaguanine (PreQ1) at position 34 (anticodon wobble position) in tRNAs with GU(N) anticodons (tRNA-Asp, -Asn, -His and -Tyr). Catalysis occurs through a double-displacement mechanism. The nucleophile active site attacks the C1' of nucleotide 34 to detach the guanine base from the RNA, forming a covalent enzyme-RNA intermediate. The proton acceptor active site deprotonates the incoming PreQ1, allowing a nucleophilic attack on the C1' of the ribose to form the product. After dissociation, two additional enzymatic reactions on the tRNA convert PreQ1 to queuine (Q), resulting in the hypermodified nucleoside queuosine (7-(((4,5-cis-dihydroxy-2-cyclopenten-1-yl)amino)methyl)-7-deazaguanosine). This is Queuine tRNA-ribosyltransferase from Shewanella loihica (strain ATCC BAA-1088 / PV-4).